The primary structure comprises 437 residues: MAGGPPKALPSTGPQSLRDMPHPLAGSSSEEAVGGDSTPSPDLLMARSFGDKDLILPNGGTPAGTASPASSSSLLNRLQLDDDIDGEARDLFVTVDDPKKHVCTMETYITYRITTKSTRVEFDLPEYSVRRRYQDFDWLRNKLEESQPTHLIPPLPEKFVVKGVVDRFSEEFVETRRKALDKFLKRITDHPVLSFNEHFNVFLTAKDLNAYKKQGIALLSRVGESVKHVTGGYKLRSRPLEFAAISDYLDTFALKLGTIDRIAQRIIKEEIEYLVELREYGPVYSTWSALEGELAEPLEGVSACIGNCSTALEELTDDITEEFLPVLREYVLYSDSMKGVLKKRDQVQAEYEAKLEAVALRKEERPKVPADVEKCQDRMECFNADLKADMERWQSNKRHDFRQLLVGLADKNIQYYEKCLMAWESIIPLLQEKQETK.

A disordered region spans residues 1–45 (MAGGPPKALPSTGPQSLRDMPHPLAGSSSEEAVGGDSTPSPDLLM). T38 bears the Phosphothreonine mark. At S40 the chain carries Phosphoserine. The PX domain maps to 89 to 210 (RDLFVTVDDP…VFLTAKDLNA (122 aa)). A 1,2-diacyl-sn-glycero-3-phospho-(1D-myo-inositol-3-phosphate)-binding residues include R132, Q134, K162, and R176. Residues 234 to 437 (KLRSRPLEFA…PLLQEKQETK (204 aa)) form the BAR domain.

This sequence belongs to the sorting nexin family. As to quaternary structure, heterodimer; heterodimerizes with SNX4.

The protein localises to the early endosome membrane. In terms of biological role, involved in the regulation of endocytosis and in several stages of intracellular trafficking. Together with SNX4, involved in autophagosome assembly. The protein is Sorting nexin-30 of Mus musculus (Mouse).